A 177-amino-acid chain; its full sequence is Large ribosomal subunit protein uL6 (177 aa).

The protein belongs to the universal ribosomal protein uL6 family. As to quaternary structure, part of the 50S ribosomal subunit.

In terms of biological role, this protein binds to the 23S rRNA, and is important in its secondary structure. It is located near the subunit interface in the base of the L7/L12 stalk, and near the tRNA binding site of the peptidyltransferase center. This Methanothermobacter thermautotrophicus (strain ATCC 29096 / DSM 1053 / JCM 10044 / NBRC 100330 / Delta H) (Methanobacterium thermoautotrophicum) protein is Large ribosomal subunit protein uL6.